We begin with the raw amino-acid sequence, 399 residues long: MPNIFVEELVHTPIEKQVIEIVERKGIGHPDSLADGMAEAMSRELSREYIRRFGAVLHHNTDETQIVAGRSNPQFGGGEVIEPIYVLLVGRATKFFNGEYIPTDKIALKAARDYIRQHMQNLDPELDVVFNVRLGEGSTDLQDVFRRKSGNVALANDTSFGIGFAPLSETERLVFNVERRIYEEFRKKNPAIGEDVKVMGLREKDRISLTIAAAFVDRYVANIKEYDAIKEELENFVKEISSEYTEREVEVFVNTADDYETGCVYLTVTGTSAENGDDGSVGRGNRCNGLITPGRPMSMEASSGKNPINHVGKIYNLLANQIAARIAEEVEGVEEVYVRILSQIGKPINEPKALSVQVIPKSGYDISKLERPARDIAEEMIANVGKITDMVIEGKVRTF.

135–140 (GEGSTD) lines the ATP pocket.

The protein belongs to the AdoMet synthase 2 family. It depends on Mg(2+) as a cofactor.

The enzyme catalyses L-methionine + ATP + H2O = S-adenosyl-L-methionine + phosphate + diphosphate. It participates in amino-acid biosynthesis; S-adenosyl-L-methionine biosynthesis; S-adenosyl-L-methionine from L-methionine: step 1/1. Its function is as follows. Catalyzes the formation of S-adenosylmethionine from methionine and ATP. This chain is S-adenosylmethionine synthase (mat), found in Archaeoglobus fulgidus (strain ATCC 49558 / DSM 4304 / JCM 9628 / NBRC 100126 / VC-16).